A 349-amino-acid chain; its full sequence is 11-beta-hydroxysteroid dehydrogenase A (349 aa).

A helical; Signal-anchor for type II membrane protein membrane pass occupies residues 10-30 (LVAPPFTFFFLCLFLPPYWGL). The short motif at 13-26 (PPFTFFFLCLFLPP) is the Proline-knob element. NADP(+) is bound by residues 54 to 80 (GASSGIGEYLAYEYAKRGACLALSARR), Asp-105, and 132 to 135 (NAAI). Ser-184 is a substrate binding site. The Proton acceptor role is filled by Tyr-197. Residues 197 to 201 (YSASK) and Lys-201 contribute to the NADP(+) site.

This sequence belongs to the short-chain dehydrogenases/reductases (SDR) family. As to expression, expressed in seeds (at protein level).

The protein resides in the lipid droplet. Its subcellular location is the membrane. It catalyses the reaction an 11beta-hydroxysteroid + NADP(+) = an 11-oxosteroid + NADPH + H(+). Has dehydrogenase activity against 11 beta-hydroxysteroid and 17 beta-hydroxysteroid. May be involved in signal transduction regulated by various sterols. In Arachis hypogaea (Peanut), this protein is 11-beta-hydroxysteroid dehydrogenase A.